Reading from the N-terminus, the 58-residue chain is UPF0509 protein YciZ (58 aa).

It belongs to the UPF0509 family.

This Escherichia fergusonii (strain ATCC 35469 / DSM 13698 / CCUG 18766 / IAM 14443 / JCM 21226 / LMG 7866 / NBRC 102419 / NCTC 12128 / CDC 0568-73) protein is UPF0509 protein YciZ.